Here is a 141-residue protein sequence, read N- to C-terminus: Hemoglobin subunit alpha (141 aa).

The region spanning 1-141 (VLSPADKTNV…VSTVLTSKYR (141 aa)) is the Globin domain. Residue serine 3 is modified to Phosphoserine. At lysine 7 the chain carries N6-succinyllysine. Position 8 is a phosphothreonine (threonine 8). Lysine 11 bears the N6-succinyllysine mark. Residue lysine 16 is modified to N6-acetyllysine; alternate. Lysine 16 carries the post-translational modification N6-succinyllysine; alternate. Residue tyrosine 24 is modified to Phosphotyrosine. Serine 35 carries the post-translational modification Phosphoserine. At lysine 40 the chain carries N6-succinyllysine. Serine 49 is subject to Phosphoserine. Histidine 58 is a binding site for O2. Histidine 87 provides a ligand contact to heme b. Residue serine 102 is modified to Phosphoserine. Threonine 108 is subject to Phosphothreonine. Phosphoserine is present on residues serine 124 and serine 131. A phosphothreonine mark is found at threonine 134 and threonine 137. A Phosphoserine modification is found at serine 138.

It belongs to the globin family. In terms of assembly, heterotetramer of two alpha chains and two beta chains. In terms of tissue distribution, red blood cells.

Functionally, involved in oxygen transport from the lung to the various peripheral tissues. In terms of biological role, hemopressin acts as an antagonist peptide of the cannabinoid receptor CNR1. Hemopressin-binding efficiently blocks cannabinoid receptor CNR1 and subsequent signaling. This chain is Hemoglobin subunit alpha (HBA), found in Gorilla gorilla gorilla (Western lowland gorilla).